Here is a 346-residue protein sequence, read N- to C-terminus: MAGIVGYGVYIPSYRIKVEEIARVWGDDPQAISRGLVVEEKSVPGPDEDTATISVEAARNALRRSQIDPSEIGAVYVGSESHPYAVKPTATIVAEAVEATPEMTAADLEFACKAGTAGIQACMGLVDSGIIKYGLAVGADTAQGAPGDALEYTASAGGAAYVIGGKNCLADIKETYSFTTDTPDFYRREGMPYPRHGGRFTGEPAYFKHVLGAARGMMEKTGLSADDFDYAVFHQPNGKFYLKAARKLGFESEQVKPGLLTPVIGNTYSGATPVGLAATLDVAEPGARILAVSYGSGAGSDAFIIEVNDLIEERRDLAPSVAEIIKNKRYVDYALYAKFKGKLRMA.

Asp28 provides a ligand contact to (3S)-3-hydroxy-3-methylglutaryl-CoA. Catalysis depends on Glu80, which acts as the Proton donor/acceptor. Positions 112 and 153 each coordinate (3S)-3-hydroxy-3-methylglutaryl-CoA. Cys112 (acyl-thioester intermediate) is an active-site residue. CoA is bound at residue Arg199. The (3S)-3-hydroxy-3-methylglutaryl-CoA site is built by Thr201 and His234. His234 (proton donor/acceptor) is an active-site residue. Lys239 serves as a coordination point for CoA. Residues Lys243, Asn266, and Ser296 each coordinate (3S)-3-hydroxy-3-methylglutaryl-CoA.

Belongs to the thiolase-like superfamily. Archaeal HMG-CoA synthase family. As to quaternary structure, interacts with acetoacetyl-CoA thiolase that catalyzes the precedent step in the pathway and with a DUF35 protein. The acetoacetyl-CoA thiolase/HMG-CoA synthase complex channels the intermediate via a fused CoA-binding site, which allows for efficient coupling of the endergonic thiolase reaction with the exergonic HMGCS reaction.

The enzyme catalyses acetoacetyl-CoA + acetyl-CoA + H2O = (3S)-3-hydroxy-3-methylglutaryl-CoA + CoA + H(+). The protein operates within metabolic intermediate biosynthesis; (R)-mevalonate biosynthesis; (R)-mevalonate from acetyl-CoA: step 2/3. Catalyzes the condensation of acetyl-CoA with acetoacetyl-CoA to form 3-hydroxy-3-methylglutaryl-CoA (HMG-CoA). Functions in the mevalonate (MVA) pathway leading to isopentenyl diphosphate (IPP), a key precursor for the biosynthesis of isoprenoid compounds that are building blocks of archaeal membrane lipids. In Methanothermobacter thermautotrophicus (strain ATCC 29096 / DSM 1053 / JCM 10044 / NBRC 100330 / Delta H) (Methanobacterium thermoautotrophicum), this protein is Hydroxymethylglutaryl-CoA synthase.